A 282-amino-acid chain; its full sequence is Putative hydrolase Bcen_5340 (282 aa).

Mg(2+)-binding residues include E124, E126, and D155.

Belongs to the FAH family. Mg(2+) is required as a cofactor.

In Burkholderia orbicola (strain AU 1054), this protein is Putative hydrolase Bcen_5340.